The primary structure comprises 764 residues: Polyribonucleotide nucleotidyltransferase (764 aa).

Asp555 and Asp561 together coordinate Mg(2+). The KH domain maps to Pro621 to Ile680. In terms of domain architecture, S1 motif spans Gly692–Val761.

This sequence belongs to the polyribonucleotide nucleotidyltransferase family. Requires Mg(2+) as cofactor.

The protein resides in the cytoplasm. It carries out the reaction RNA(n+1) + phosphate = RNA(n) + a ribonucleoside 5'-diphosphate. Its function is as follows. Involved in mRNA degradation. Catalyzes the phosphorolysis of single-stranded polyribonucleotides processively in the 3'- to 5'-direction. The sequence is that of Polyribonucleotide nucleotidyltransferase from Corynebacterium jeikeium (strain K411).